The chain runs to 578 residues: MPRGLELLIAQTILQGFDAQYGRFLEVTSGAQQRFEQADWHAVQQAMKNRIHLYDHHVGLVVEQLRCITNGQSTDAAFLLRVKEHYTRLLPDYPRFEIAESFFNSVYCRLFDHRSLTPERLFIFSSQPERRFRTIPRPLAKDFHPDHGWESLLMRVISDLPLRLRWQNKSRDIHYIIRHLTETLGTDNLAESHLQVANELFYRNKAAWLVGKLITPSGTLPFLLPIHQTDDGELFIDTCLTTTAEASIVFGFARSYFMVYAPLPAALVEWLREILPGKTTAELYMAIGCQKHAKTESYREYLVYLQGCNEQFIEAPGIRGMVMLVFTLPGFDRVFKVIKDKFAPQKEMSAAHVRACYQLVKEHDRVGRMADTQEFENFVLEKRHISPALMELLLQEAAEKITDLGEQIVIRHLYIERRMVPLNIWLEQVEGQQLRDAIEEYGNAIRQLAAANIFPGDMLFKNFGVTRHGRVVFYDYDEICYMTEVNFRDIPPPRYPEDELASEPWYSVSPGDVFPEEFRHWLCADPRIGPLFEEMHADLFRADYWRALQNRIREGHVEDVYAYRRRQRFSVRYGEMLF.

ATP-binding positions include 315–321 (APGIRGM) and K336. The active site involves D371.

It belongs to the AceK family.

Its subcellular location is the cytoplasm. The enzyme catalyses L-seryl-[isocitrate dehydrogenase] + ATP = O-phospho-L-seryl-[isocitrate dehydrogenase] + ADP + H(+). Its function is as follows. Bifunctional enzyme which can phosphorylate or dephosphorylate isocitrate dehydrogenase (IDH) on a specific serine residue. This is a regulatory mechanism which enables bacteria to bypass the Krebs cycle via the glyoxylate shunt in response to the source of carbon. When bacteria are grown on glucose, IDH is fully active and unphosphorylated, but when grown on acetate or ethanol, the activity of IDH declines drastically concomitant with its phosphorylation. This chain is Isocitrate dehydrogenase kinase/phosphatase, found in Escherichia coli O139:H28 (strain E24377A / ETEC).